We begin with the raw amino-acid sequence, 1184 residues long: MYIEDIIIDGFKSYANRTVIEGFDPTFNAITGLNGSGKSNILDSICFVLGISNLSQVRVDSLQELVYKKGQAGITKASVTITFNNSDKKQSPAGYEHLDKITVTRQVAIGGRNKYLINGHNAQLSRVQDLFHSVQLNVNNPHFLIMQGRITKVLNMKPPEILAMIEEAAGTRMFEMKKNSALNTIEKKQKKVDEITKVLAEEITPTLDKLRGERTSYMKFTNNQTLIDRLQRFIIAYEYYTYEKKLESSEFESFKAEIDKGQKRKKDLTLKSTDLKAKISELAKQREKETNLEEMDQQEQKLSKELVKYQTSHKHQKESLDKEEGAINNLANTREEIKQSIQQKQKEKQSMEKKIQSIVEENQQINAELKTLQNKHNTMTTGISTGADGSSAAEDGSYTEQLMEAKKTAVNAASEYKQAEFRVKHLQSELIAKRKAITQEQTDHKKLQAEQELVEREIQQLTRSIQELQLDNSKQQELTEKKRQLEPLVSKLREEVGNASAQLSGLEFNYTDPSKSFDRSKVKGIVANLITLKDVETATALEICASGKLYNIVIEDDETGKALLSKGQLKRRVTLLPLNKVEGRSIDPQKIKNAQKIAPNGAVKPAIEFVEYDKELQPAMNFVFGSTFIATDKKYAQKAAFDSSIKVRTISLEGDEYNPAGSLTGGSRPPSGSILTQIQRLNENNRCLRENQSQLEHINFELVQLKSVTDRFKQLEQQLNIKQHAASLIAQRFQLNPHHQLLESIKEMEKSIESDTQLITNSMIKEKEALEKVKQLESQVNDFQSIRESQLKDLEKKIQITKEKCIKSNKIVKGEQVFIEKLDLEIQEMDNELENLSKETQGNQGTISKMRKDVDTLARSISETNKQIQDIRETLSEIRKDMAQKNDAIRSLHQELEKIQSEITEIDMSTEKLKSRMNRVDKDRQEASKWLEAAIKKHTWIKNEKQLFNRPGSDFDFNATDPSKANSEYIKLQEEQEKLSKTINRKVMSMFEKAEQEYQELMEKKKIIENDKSKIEHVIRELDEKKNESLRTTWKKVNKDFGSIFSTLLPGTSAKLEPPEGQNELFGLEVKVAFGDVWKETLSELSGGQKSLLALSLILSLLLFKPAPMYILDEIDAALDLSHTQNIGMMLKQHFTSSQFIVVSLKEGMFTNANVLFETKFIDGVSKVHRTVFNKKDKQVGKKK.

32–39 (GLNGSGKS) contributes to the ATP binding site. The region spanning 520–639 (SKVKGIVANL…ATDKKYAQKA (120 aa)) is the SMC hinge domain.

It belongs to the SMC family. SMC2 subfamily. As to quaternary structure, forms a heterodimer with smc4. Component of the condensin complex, which contains the smc2-smc4 heterodimer.

Its subcellular location is the nucleus. Its function is as follows. Central component of the condensin complex, a complex required for conversion of interphase chromatin into mitotic-like condense chromosomes. The condensin complex probably introduces positive supercoils into relaxed DNA in the presence of type I topoisomerases and converts nicked DNA into positive knotted forms in the presence of type II topoisomerases. This Dictyostelium discoideum (Social amoeba) protein is Structural maintenance of chromosomes protein 2 (smc2).